A 314-amino-acid polypeptide reads, in one-letter code: Homeobox protein SIX3 (314 aa).

The homeobox DNA-binding region spans Gly188–Ala247. 2 disordered regions span residues Asn214–Gly233 and Arg240–Val314. A compositionally biased stretch (low complexity) spans Pro271–Thr293. Polar residues predominate over residues Thr298–Val314.

Belongs to the SIX/Sine oculis homeobox family.

Its subcellular location is the nucleus. Transcriptional regulator which can act as both a transcriptional repressor and activator by binding a ATTA homeodomain core recognition sequence on these target genes. During forebrain development represses WNT1 expression allowing zona limitans intrathalamica formation and thereby ensuring proper anterio-posterior patterning of the diencephalon and formation of the rostral diencephalon. Acts as a direct upstream activator of SHH expression in the rostral diencephalon ventral midline and that in turn SHH maintains its expression. In addition, Six3 activity is required for the formation of the telencephalon. During postnatal stages of brain development is necessary for ependymal cell maturation by promoting the maturation of radial glia into ependymal cells through regulation of neuroblast proliferation and migration. Acts on the proliferation and differentiation of neural progenitor cells through activating transcription of CCND1 and CCND2. During early lens formation plays a role in lens induction and specification by activating directly PAX6 in the presumptive lens ectoderm. In turn PAX6 activates SIX3 resulting in activation of PDGFRA and CCND1 promoting cell proliferation. Also is required for the neuroretina development by directly suppressing WNT8B expression in the anterior neural plate territory. Its action during retina development and lens morphogenesis is AES and TLE4-dependent manner. Furthermore, during eye development regulates several genes expression. Before and during early lens development represses the CRYGF promoter by binding a SIX repressor element. Directly activates RHO transcription, or cooperates with CRX or NRL. Six3 also functions in the formation of the proximodistal axis of the optic cup, and promotes the formation of optic vesicles-like structures. During pituitary development, acts in parallel or alternatively with HESX1 to control cell proliferation through Wnt/beta-catenin pathway. Plays a role in eye development by suppressing WNT1 expression and in dorsal-ventral patterning by repressing BMP signaling pathway. This is Homeobox protein SIX3 (SIX3) from Gallus gallus (Chicken).